The following is a 60-amino-acid chain: Large ribosomal subunit protein bL32 (60 aa).

Residues 1-60 (MAVQQNKKSPSKRGMHRSHDFLVNPSTAIEPTTGETHLRHHISPNGFYRGRKVLKTKADE) are disordered. A compositionally biased stretch (polar residues) spans 24-35 (NPSTAIEPTTGE). The segment covering 49-60 (RGRKVLKTKADE) has biased composition (basic residues).

This sequence belongs to the bacterial ribosomal protein bL32 family.

This is Large ribosomal subunit protein bL32 from Bordetella petrii (strain ATCC BAA-461 / DSM 12804 / CCUG 43448).